The sequence spans 421 residues: Hydrolyase poxO (421 aa).

The active-site Nucleophile is Ser-239.

Belongs to the AB hydrolase superfamily. FUS2 hydrolase family. As to quaternary structure, homodimer.

The protein operates within secondary metabolite biosynthesis. Hydrolyase; part of the gene cluster that mediates the biosynthesis of oxaleimides, cytotoxic compounds containing an unusual disubstituted succinimide moiety. The first step of the pathway is provided by the HR-PKS poxF that serves in a new mode of collaborative biosynthesis with the PKS-NRPS poxE, by providing the olefin containing amino acid substrate via the synthesis of an ACP-bound dec-4-enoate. The cytochrome P450 monooxygenase poxM-catalyzed oxidation at the alpha-position creates the enzyme-bound 2-hydroxydec-4-enoyl-ACP thioester, which may be prone to spontaneous hydrolysis to yield 2-hydroxydec-4-enoic acid due to increased electrophilicity of the carbonyl. 2-hydroxydec-4-enoic acid can then be further oxidized by poxM to yield the alpha-ketoacid 2-oxodec-4-enoicacid, which is reductively aminated by the aminotransferase poxL to yield (S,E)-2-aminodec-4-enoic acid. The Hybrid PKS-NRPS synthetase poxE then performs condensation between the octaketide product of its PKS modules and the amino group of (S,E)-2-aminodec-4-enoic acid which is activated and incorporated by the adenylation domain. The resulting aminoacyl product can be cyclized by the Diels-Alderase PoxQ and reductively released by the reductive (R) domain of poxE to yield an aldehyde intermediate. The released aldehyde is then substrate for a Knoevenagel condensation by the hydrolyase poxO followed by an oxidation at the 5-position of the pyrrolidone ring. The presence of the olefin from the amino acid building block allows for migration of the substituted allyl group to occur. This allylic transposition reaction takes place in a conjugate addition, semipinacol-like fashion to yield a succinimide intermediate. Iterative two-electron oxidations of the C7 methyl of the succinimide intermediate to the carboxylic acid can be catalyzed by one of two remaining cytochrome P450 monooxygenasess poxC or poxD to yield oxaleimide A. Subsequent oxidation yields the maleimide scaffold oxaleimide I. Both oxaleimide A and oxaleimide I can undergo oxidative modifications in the decalin ring to yield the series of products oxaleimides B to H. In Penicillium oxalicum (strain 114-2 / CGMCC 5302) (Penicillium decumbens), this protein is Hydrolyase poxO.